The primary structure comprises 230 residues: MFAAIQPGLAEGAQYPGSLPPGVCQPDLQPDNNSNFVESAKDANKNWHGVPGKVDPILIRSSSESPSDNQVFQATRLPEAGVRSPPEGAEIPGAEPEKLSGASSVCSPLEDIGYASSSLSIDSFSSSPEPVCDTPRGPSPLDPLLPSVAQAVQQLQAQERYKEQEKEKHHAHLVMYRRLALLQWIRALQHQLVDQQARLQESFDTILDNRKELIRCLQQREAPCRHQDQG.

A disordered region spans residues 1-103 (MFAAIQPGLA…AEPEKLSGAS (103 aa)). The span at 60-73 (RSSSESPSDNQVFQ) shows a compositional bias: polar residues. Positions 85–94 (PPEGAEIPGA) are enriched in low complexity.

It belongs to the UPF0500 family.

The protein is UPF0500 protein C1orf216 homolog of Mus musculus (Mouse).